The primary structure comprises 416 residues: Gamma-glutamyl phosphate reductase (416 aa).

It belongs to the gamma-glutamyl phosphate reductase family.

Its subcellular location is the cytoplasm. The enzyme catalyses L-glutamate 5-semialdehyde + phosphate + NADP(+) = L-glutamyl 5-phosphate + NADPH + H(+). It functions in the pathway amino-acid biosynthesis; L-proline biosynthesis; L-glutamate 5-semialdehyde from L-glutamate: step 2/2. Its function is as follows. Catalyzes the NADPH-dependent reduction of L-glutamate 5-phosphate into L-glutamate 5-semialdehyde and phosphate. The product spontaneously undergoes cyclization to form 1-pyrroline-5-carboxylate. The chain is Gamma-glutamyl phosphate reductase from Salmonella schwarzengrund (strain CVM19633).